The primary structure comprises 720 residues: MAKRVADAQIQRETYDSNESDDDVTPSTKVASSAVMNRRKIAMPKRRMAFKPFGSAKSDETKQASSFSFLNRADGTGEAQVDNSPTTESNSRLKALNLQFKAKVDDLVLGKPLADLRPLFTRYELYIKNILEAPVKSIENPTQTKGNDAKPAKVEDVQKSSDSSSEDEVKVEGPKFTIDAKPPISDSVFSFGPKKENRKKDESDSENDIEIKGPEFKFSGTVSSDVFKLNPSTDKNEKKTETNAKPFSFSSATSTTEQTKSKNPLSLTEATKTNVDNNSKAEASFTFGTKHAADSQNNKPSFVFGQAAAKPSLEKSSFTFGSTTIEKKNDENSTSNSKPEKSSDSNDSNPSFSFSIPSKNTPDASKPSFSFGVPNSSKNETSKPVFSFGAATPSAKEASQEDDNNNVEKPSSKPAFNLISNAGTEKEKESKKDSKPAFSFGISNGSESKDSDKPSLPSAVDGENDKKEATKPAFSFGINTNTTKTADTKAPTFTFGSSALADNKEDVKKPFSFGTSQPNNTPSFSFGKTTANLPANSSTSPAPSIPSTGFKFSLPFEQKGSQTTTNDSKEESTTEATGNESQDATKVDATPEESKPINLQNGEEDEVALFSQKAKLMTFNAETKSYDSRGVGEMKLLKKKDDPSKVRLLCRSDGMGNVLLNATVVDSFKYEPLAPGNDNLIKAPTVAADGKLVTYIVKFKQKEEGRSFTKAIEDAKKEMK.

Positions 1 to 33 (MAKRVADAQIQRETYDSNESDDDVTPSTKVASS) are disordered. Residues serine 17 and serine 20 each carry the phosphoserine modification. The segment at 35-50 (VMNRRKIAMPKRRMAF) is interaction with SRP1 NLS binding site 1. Disordered stretches follow at residues 52–92 (PFGS…SNSR) and 136–278 (KSIE…VDNN). Residues 67-69 (FSF) form an FXF 1 repeat. Over residues 81 to 92 (VDNSPTTESNSR) the composition is skewed to polar residues. At serine 137 the chain carries Phosphoserine. A compositionally biased stretch (basic and acidic residues) spans 147–159 (NDAKPAKVEDVQK). Serine 165 is modified (phosphoserine). Residues 189–192 (FSFG) form an FXFG 1 repeat. Positions 193 to 202 (PKKENRKKDE) are enriched in basic and acidic residues. A phosphoserine mark is found at serine 203 and serine 205. FXF repeat units follow at residues 216 to 218 (FKF) and 247 to 249 (FSF). Over residues 243–278 (NAKPFSFSSATSTTEQTKSKNPLSLTEATKTNVDNN) the composition is skewed to polar residues. 3 FXFG repeats span residues 285–288 (FTFG), 302–305 (FVFG), and 318–321 (FTFG). Positions 315–324 (KSSFTFGSTT) are enriched in polar residues. Residues 315–604 (KSSFTFGSTT…KPINLQNGEE (290 aa)) form a disordered region. Residues 345–360 (SNDSNPSFSFSIPSKN) show a composition bias toward low complexity. 2 positions are modified to phosphoserine: serine 348 and serine 351. One copy of the FXF 4 repeat lies at 352 to 354 (FSF). At threonine 361 the chain carries Phosphothreonine. The FXFG 5 repeat unit spans residues 369–372 (FSFG). The segment covering 373 to 384 (VPNSSKNETSKP) has biased composition (polar residues). An FXFG 6 repeat occupies 386 to 389 (FSFG). Positions 424–435 (TEKEKESKKDSK) are enriched in basic and acidic residues. 5 FXFG repeats span residues 438–441 (FSFG), 474–477 (FSFG), 493–496 (FTFG), 511–514 (FSFG), and 524–527 (FSFG). Low complexity predominate over residues 479–495 (NTNTTKTADTKAPTFTF). Over residues 513–533 (FGTSQPNNTPSFSFGKTTANL) the composition is skewed to polar residues. Positions 534-548 (PANSSTSPAPSIPST) are enriched in low complexity. One copy of the FXF 5 repeat lies at 550-552 (FKF). Positions 574–584 (TEATGNESQDA) are enriched in polar residues. Serine 581 carries the phosphoserine modification. The region spanning 583–720 (DATKVDATPE…AIEDAKKEMK (138 aa)) is the RanBD1 domain. Phosphothreonine is present on threonine 590.

As to quaternary structure, component of the nuclear pore complex (NPC). NPC constitutes the exclusive means of nucleocytoplasmic transport. NPCs allow the passive diffusion of ions and small molecules and the active, nuclear transport receptor-mediated bidirectional transport of macromolecules such as proteins, RNAs, ribonucleoparticles (RNPs), and ribosomal subunits across the nuclear envelope. Due to its 8-fold rotational symmetry, all subunits are present with 8 copies or multiples thereof. Binds to the nuclear basket of the NPC through NUP60 in a (GSP1, GSP2) GTPase-GTP-dependent manner. Interacts through its FG repeats with nuclear transport factors. Interacts with KAP122.

It localises to the nucleus. It is found in the nuclear pore complex. The protein resides in the nucleus membrane. Functionally, functions as a component of the nuclear pore complex (NPC). NPC components, collectively referred to as nucleoporins (NUPs), can play the role of both NPC structural components and of docking or interaction partners for transiently associated nuclear transport factors. Active directional transport is assured by both, a Phe-Gly (FG) repeat affinity gradient for these transport factors across the NPC and a transport cofactor concentration gradient across the nuclear envelope (GSP1 and GSP2 GTPases associated predominantly with GTP in the nucleus, with GDP in the cytoplasm). As one of the FG repeat nucleoporins NUP2 is involved in interactions with and guidance of nuclear transport receptors such as SRP1-KAP95 (importin alpha and beta) through the NPC. Like the closely related NUP1 it also plays an important role in disassembling and recycling SRP1-KAP95 to the cytoplasm after nuclear import. Upon entry of the heterotrimeric SRP1-KAP95-cargo complex in the nucleus, NUP2 binds through its N-terminus to the SRP1 nuclear localization signal (NLS) binding site, thus accelerating the release of the NLS-cargo. SRP1 in turn is released from NUP2 by binding of the GSP1-GTP associated export factor CSE1. NUP2 may also have a chromatin boundary/insulator activity through indirect interaction with genomic DNA via CSE1 and blocking of heterochromatin spreading. This Saccharomyces cerevisiae (strain ATCC 204508 / S288c) (Baker's yeast) protein is Nucleoporin NUP2 (NUP2).